Reading from the N-terminus, the 177-residue chain is Outer envelope pore protein 21, chloroplastic (177 aa).

At 1–21 the chain is on the cytoplasmic side; sequence METSLRYGGDSKALKIHAKEK. Residues 22-31 form a beta stranded membrane-spanning segment; that stretch reads LRIDTNTFFQ. Topologically, residues 32-55 are chloroplast intermembrane; the sequence is VRGGLDTKTGQPSSGSALIRHFYP. Residues 56 to 65 form a beta stranded membrane-spanning segment; that stretch reads NFSATLGVGV. Topologically, residues 66 to 81 are cytoplasmic; the sequence is RYDKQDSVGVRYAKND. A beta stranded transmembrane segment spans residues 82 to 91; the sequence is KLRYTVLAKK. The Chloroplast intermembrane portion of the chain corresponds to 92 to 97; that stretch reads TFPVTN. Residues 98–107 form a beta stranded membrane-spanning segment; the sequence is DGLVNFKIKG. Over 108 to 120 the chain is Cytoplasmic; it reads GCDVDQDFKEWKS. The beta stranded transmembrane segment at 121–130 threads the bilayer; the sequence is RGGAEFSWNV. Over 131–137 the chain is Chloroplast intermembrane; sequence FNFQKDQ. The beta stranded transmembrane segment at 138-147 threads the bilayer; that stretch reads DVRLRIGYEA. Residues 148–152 are Cytoplasmic-facing; that stretch reads FEQVP. The chain crosses the membrane as a beta stranded span at residues 153–162; that stretch reads YLQIRENNWT. Residues 163–168 are Chloroplast intermembrane-facing; sequence FNADYK. A beta stranded membrane pass occupies residues 169–177; that stretch reads GRWNVRYDL.

This sequence belongs to the plastid outer envelope porin OEP21 (TC 1.B.29) family. As to expression, present in roots, shoots and leaves.

The protein localises to the plastid. The protein resides in the etioplast membrane. Its subcellular location is the chloroplast outer membrane. Voltage-dependent rectifying anion channel that facilitates the translocation between chloroplast and cytoplasm of phosphorylated carbohydrates such as triosephosphate, 3-phosphoglycerate and inorganic phosphate (Pi) depending of ATP to triosephosphate ratio in the plastidial intermembrane space; in high triosephosphate/ATP conditions (e.g. photosynthesis), export of triosphosphate from chloroplast (outward rectifying channels), but in high ATP/triosephosphate conditions (e.g. dark phase), import of phosphosolutes (inward rectifying channels). This is Outer envelope pore protein 21, chloroplastic (OEP21) from Pisum sativum (Garden pea).